A 143-amino-acid chain; its full sequence is Transcription antitermination protein NusB (143 aa).

The protein belongs to the NusB family.

Involved in transcription antitermination. Required for transcription of ribosomal RNA (rRNA) genes. Binds specifically to the boxA antiterminator sequence of the ribosomal RNA (rrn) operons. This chain is Transcription antitermination protein NusB, found in Desulforamulus reducens (strain ATCC BAA-1160 / DSM 100696 / MI-1) (Desulfotomaculum reducens).